We begin with the raw amino-acid sequence, 911 residues long: Protein translocase subunit SecA (911 aa).

ATP contacts are provided by residues Gln-87, 105-109 (GEGKT), and Asp-513. The interval 853–911 (IQLQHEQVSGLEPEAGEAPSAGEPRSEQPYVRAGRKVGRNDPCPCGSGKKFKACHGKLG) is disordered. Low complexity predominate over residues 862 to 875 (GLEPEAGEAPSAGE). Cys-895, Cys-897, Cys-906, and His-907 together coordinate Zn(2+). Residues 901 to 911 (KKFKACHGKLG) are compositionally biased toward basic residues.

The protein belongs to the SecA family. Monomer and homodimer. Part of the essential Sec protein translocation apparatus which comprises SecA, SecYEG and auxiliary proteins SecDF-YajC and YidC. Requires Zn(2+) as cofactor.

The protein resides in the cell inner membrane. It is found in the cytoplasm. It catalyses the reaction ATP + H2O + cellular proteinSide 1 = ADP + phosphate + cellular proteinSide 2.. In terms of biological role, part of the Sec protein translocase complex. Interacts with the SecYEG preprotein conducting channel. Has a central role in coupling the hydrolysis of ATP to the transfer of proteins into and across the cell membrane, serving both as a receptor for the preprotein-SecB complex and as an ATP-driven molecular motor driving the stepwise translocation of polypeptide chains across the membrane. In Teredinibacter turnerae (strain ATCC 39867 / T7901), this protein is Protein translocase subunit SecA.